The primary structure comprises 658 residues: MKLYCLSGHPTLPCNVLKFKSTTIMLDCGLDMTSTLNFLPLPLVQSPRLSNLPGWSLKDGNAFLDKELKECSGHVFVDSVPEFCLPETELIDLSTVDVILISNYHCMMALPYITEHTGFTGTVYATEPTVQIGRLLMEELVNFIERVPKAQSASLWKNKDIQRLLPSPLKDAVEVSTWRRCYTMQEVNSALSKIQLVGYSQKIELFGAVQVTPLSSGYALGSSNWIIQSHYEKVSYVSGSSLLTTHPQPMDQASLKNSDVLVLTGLTQIPTANPDGMVGEFCSNLALTVRNGGNVLVPCYPSGVIYDLLECLYQYIDSAGLSSVPLYFISPVANSSLEFSQIFAEWLCHNKQSKVYLPEPPFPHAELIQTNKLKHYPSIHGDFSNDFRQPCVVFTGHPSLRFGDVVHFMELWGKSSLNTVIFTEPDFSYLEALAPYQPLAMKCIYCPIDTRLNFIQVSKLLKEVQPLHVVCPEQYTQPPPAQSHRMDLMIDCQPPAMSYRRAEVLALPFKRRYEKIEIMPELADSLVPMEIKPGISLATVSAVLHTKDNKHLLQPPPRPAQPTSGKKRKRVSDDVPDCKVLKPLLSGSIPVEQFVQTLEKHGFSDIKVEDTAKGHIVLLQEAETLIQIEEDSTHIICDNDEMLRVRLRDLVLKFLQKF.

2 residues coordinate 1D-myo-inositol hexakisphosphate: Lys2 and Phe19. Lys58 is covalently cross-linked (Glycyl lysine isopeptide (Lys-Gly) (interchain with G-Cter in SUMO2)). 1D-myo-inositol hexakisphosphate contacts are provided by Lys510 and Arg511. The segment at Asp548–Asp574 is disordered. Positions Lys566–Arg570 match the Nuclear localization signal motif.

Belongs to the metallo-beta-lactamase superfamily. RNA-metabolizing metallo-beta-lactamase-like family. INTS9 subfamily. As to quaternary structure, component of the Integrator complex, composed of core subunits INTS1, INTS2, INTS3, INTS4, INTS5, INTS6, INTS7, INTS8, INTS9/RC74, INTS10, INTS11/CPSF3L, INTS12, INTS13, INTS14 and INTS15. The core complex associates with protein phosphatase 2A subunits PPP2CA and PPP2R1A, to form the Integrator-PP2A (INTAC) complex. INTS9 is part of the RNA endonuclease subcomplex, composed of INTS4, INTS9, INTS11 and inositol hexakisphosphate (InsP6). Interacts with WDR73; interaction is required for the assembly of the RNA endonuclease subcomplex in the cytoplasm. Interacts with BRAT1; interaction is required for the assembly of the RNA endonuclease subcomplex. Interacts with ESRRB, ESRRB is not a core component of the Integrator complex and this association is a bridge for the interaction with the multiprotein complex Integrator; attracts the transcriptional machinery.

Its subcellular location is the nucleus. The protein resides in the cytoplasm. Component of the integrator complex, a multiprotein complex that terminates RNA polymerase II (Pol II) transcription in the promoter-proximal region of genes. The integrator complex provides a quality checkpoint during transcription elongation by driving premature transcription termination of transcripts that are unfavorably configured for transcriptional elongation: the complex terminates transcription by (1) catalyzing dephosphorylation of the C-terminal domain (CTD) of Pol II subunit POLR2A/RPB1 and SUPT5H/SPT5, (2) degrading the exiting nascent RNA transcript via endonuclease activity and (3) promoting the release of Pol II from bound DNA. The integrator complex is also involved in terminating the synthesis of non-coding Pol II transcripts, such as enhancer RNAs (eRNAs), small nuclear RNAs (snRNAs), telomerase RNAs and long non-coding RNAs (lncRNAs). Mediates recruitment of cytoplasmic dynein to the nuclear envelope, probably as component of the integrator complex. This chain is Integrator complex subunit 9, found in Homo sapiens (Human).